A 213-amino-acid chain; its full sequence is Protein GrpE (213 aa).

The segment at 1 to 61 is disordered; the sequence is MEQGEKQVME…AEKAPTAEEL (61 aa). Positions 13-35 are enriched in acidic residues; that stretch reads TYDEPEREQPIEEEAAPQPEEES.

Belongs to the GrpE family. In terms of assembly, homodimer.

The protein resides in the cytoplasm. In terms of biological role, participates actively in the response to hyperosmotic and heat shock by preventing the aggregation of stress-denatured proteins, in association with DnaK and GrpE. It is the nucleotide exchange factor for DnaK and may function as a thermosensor. Unfolded proteins bind initially to DnaJ; upon interaction with the DnaJ-bound protein, DnaK hydrolyzes its bound ATP, resulting in the formation of a stable complex. GrpE releases ADP from DnaK; ATP binding to DnaK triggers the release of the substrate protein, thus completing the reaction cycle. Several rounds of ATP-dependent interactions between DnaJ, DnaK and GrpE are required for fully efficient folding. This chain is Protein GrpE, found in Geobacillus kaustophilus (strain HTA426).